Here is a 551-residue protein sequence, read N- to C-terminus: MQEYLIASIQQALLASGIEPPKEITIEKPSNKQFGDFSTNIALTLAKECRKNPRQLAEEISAKLEFRPETVDKTTIAGPGFINFYLTPAFIMQSVEQVLNEGDQFGKTCTGKGQKAIVEYVSANPTGPLTIGRGRGGVLGDCIANLLESQGYKVTREYYFNDAGRQMTILAESVRLRYLECCGEAIAFPDTHYQGDYISDIAAKLFEKHGVELKEVSQLDEFKQIAETYIFASIKNTLHRLNIHHDSFFNEHKLYQTGQNGKSPNEQVIDALDKAGYISNYDGAVWFTTTKLGQEKDKVLIKSTGEPSYRLPDIAYHVTKYERAFSEIINVFGADHIDEYPDVIEALRILGYDPGRIKVAINQFVTTTVNGETVKMSTRKGNADLLDDLIDDVGADATRLFFIMRSKDSHLNFDVELAKKQSRDNPVFYLQYAHARICSLVKLAEQEIGFTQSDIGVHLMQNLDSPHELQLGLALLDFPEVISSAVRMLEPQKMVEYLHHVAELYHRFYQECPILKAEPDICKARLFLSLATRQVLQNGFRILGVTAPTAM.

Residues 123-133 carry the 'HIGH' region motif; sequence ANPTGPLTIGR.

The protein belongs to the class-I aminoacyl-tRNA synthetase family. Monomer.

Its subcellular location is the cytoplasm. The enzyme catalyses tRNA(Arg) + L-arginine + ATP = L-arginyl-tRNA(Arg) + AMP + diphosphate. This chain is Arginine--tRNA ligase, found in Prosthecochloris aestuarii (strain DSM 271 / SK 413).